A 323-amino-acid polypeptide reads, in one-letter code: Sphingolipid delta(4)-desaturase DES1 (323 aa).

A lipid anchor (N-myristoyl glycine) is attached at Gly2. Transmembrane regions (helical) follow at residues 41-61 (PNLI…FYIV) and 68-88 (WVIF…TLAI). The Histidine box-1 motif lies at 89-93 (HEIAH). Residues 102–122 (AMWNRWFGMFANLPIGIPYSI) form a helical membrane-spanning segment. Positions 128 to 132 (HMDHH) match the Histidine box-2 motif. 3 helical membrane-spanning segments follow: residues 152–172 (FFCT…FYAF), 184–204 (YLEV…YYFL), and 209–229 (LVYM…SGHF). Positions 259-263 (HNEHH) match the Histidine box-3 motif. Position 307 is a phosphoserine (Ser307).

The protein belongs to the fatty acid desaturase type 1 family. DEGS subfamily. As to quaternary structure, interacts with RLBP1; the interaction increases synthesis of chromophore-precursors by DEGS1. In terms of processing, myristoylation can target the enzyme to the mitochondria leading to an increase in ceramide levels. As to expression, ubiquitous.

It is found in the mitochondrion membrane. Its subcellular location is the endoplasmic reticulum membrane. The enzyme catalyses an N-acylsphinganine + 2 Fe(II)-[cytochrome b5] + O2 + 2 H(+) = an N-acylsphing-4-enine + 2 Fe(III)-[cytochrome b5] + 2 H2O. It catalyses the reaction all-trans-retinol = 11-cis-retinol. It carries out the reaction all-trans-retinol = 9-cis-retinol. The catalysed reaction is all-trans-retinol = 13-cis-retinol. The enzyme catalyses 11-cis-retinol = 13-cis-retinol. It catalyses the reaction 11-cis-retinol = 9-cis-retinol. In terms of biological role, has sphingolipid-delta-4-desaturase activity. Converts D-erythro-sphinganine to D-erythro-sphingosine (E-sphing-4-enine). Catalyzes the equilibrium isomerization of retinols. In Homo sapiens (Human), this protein is Sphingolipid delta(4)-desaturase DES1.